The sequence spans 203 residues: Holliday junction branch migration complex subunit RuvA (203 aa).

Residues 1 to 64 (MIGRLRGTLA…EDAQLLYGFI (64 aa)) form a domain I region. The interval 65 to 143 (GKRDRDFFRE…AWEVVPSMFA (79 aa)) is domain II. Residues 144–154 (LVPNQPDMPAG) form a flexible linker region. Residues 155–203 (QVASAESDAVSALISLGYKPQEASKAVSAIKDKNLSSEDMIRRALKGMI) are domain III.

It belongs to the RuvA family. As to quaternary structure, homotetramer. Forms an RuvA(8)-RuvB(12)-Holliday junction (HJ) complex. HJ DNA is sandwiched between 2 RuvA tetramers; dsDNA enters through RuvA and exits via RuvB. An RuvB hexamer assembles on each DNA strand where it exits the tetramer. Each RuvB hexamer is contacted by two RuvA subunits (via domain III) on 2 adjacent RuvB subunits; this complex drives branch migration. In the full resolvosome a probable DNA-RuvA(4)-RuvB(12)-RuvC(2) complex forms which resolves the HJ.

The protein resides in the cytoplasm. Its function is as follows. The RuvA-RuvB-RuvC complex processes Holliday junction (HJ) DNA during genetic recombination and DNA repair, while the RuvA-RuvB complex plays an important role in the rescue of blocked DNA replication forks via replication fork reversal (RFR). RuvA specifically binds to HJ cruciform DNA, conferring on it an open structure. The RuvB hexamer acts as an ATP-dependent pump, pulling dsDNA into and through the RuvAB complex. HJ branch migration allows RuvC to scan DNA until it finds its consensus sequence, where it cleaves and resolves the cruciform DNA. In Pseudomonas fluorescens (strain SBW25), this protein is Holliday junction branch migration complex subunit RuvA.